The following is a 388-amino-acid chain: (S)-8-oxocitronellyl enol synthase ISY1 (388 aa).

NADP(+) is bound by residues 35 to 37 (TGI), 63 to 64 (RR), 81 to 82 (DV), 105 to 106 (TW), and Q143. Catalysis depends on residues K147 and Y178. NADP(+) contacts are provided by residues Y178, I205, and 212 to 214 (SMM).

It belongs to the short-chain dehydrogenases/reductases (SDR) family.

It carries out the reaction (S)-8-oxocitronellyl enol + NADP(+) = (6E)-8-oxogeranial + NADPH + H(+). It catalyses the reaction (S)-8-oxocitronellyl enol + NAD(+) = (6E)-8-oxogeranial + NADH + H(+). In terms of biological role, iridoid synthase that catalyzes the first step in generation of the iridoid ring scaffold using the linear monoterpene (6E)-8-oxogeranial as substrate. Iridoids comprise a large family of distinctive bicyclic monoterpenes that possess a wide range of pharmacological activities, including anticancer, anti-inflammatory, antifungal and antibacterial activities. Catalyzes the conversion of the linear monoterpene (6E)-8-oxogeranial to (S)-8-oxocitronellyl enol, a precursor of nepetalactones, which are metabolites that are both insect-repellent and have euphoric effect in cats. This Nepeta racemosa (Catmint) protein is (S)-8-oxocitronellyl enol synthase ISY1.